Here is a 461-residue protein sequence, read N- to C-terminus: Phosphatidate cytidylyltransferase 1 (461 aa).

Residues 1-68 (MLELRHRGGC…PEVPPSSDRT (68 aa)) form a disordered region. R7 is subject to Omega-N-methylarginine. Over residues 22 to 56 (REGEAAGGDHETESTSDKETDIDDRYGDLDARGDS) the composition is skewed to basic and acidic residues. Phosphoserine occurs at positions 35 and 37. 6 helical membrane-spanning segments follow: residues 96–116 (MISLFFLIIYMGSFMLMLLVL), 149–169 (FLLCVNYFFYGETVADYFATF), 183–203 (HRFISFALYLAGFCMFVLSLV), 230–250 (LVIQNLFEGMIWFLVPISSVI), 279–299 (GFIGGFFSTVIFGFIAAYVLS), and 357–377 (IALSTFASLIGPFGGFFASGF).

Belongs to the CDS family. In terms of assembly, homodimer. Interacts with FOS; this interaction may enhance catalytic activity. The cofactor is Mg(2+). In terms of tissue distribution, brain, retina and testis. Found in cerebellar Purkinje cells, pineal body, inner segment of photoreceptor cells and postmitotic spermatocytes and spermatids.

The protein localises to the endoplasmic reticulum membrane. The enzyme catalyses a 1,2-diacyl-sn-glycero-3-phosphate + CTP + H(+) = a CDP-1,2-diacyl-sn-glycerol + diphosphate. The catalysed reaction is 1-octadecanoyl-2-(5Z,8Z,11Z,14Z-eicosatetraenoyl)-sn-glycero-3-phosphate + CTP + H(+) = 1-octadecanoyl-2-(5Z,8Z,11Z,14Z-eicosatetraenoyl)-sn-glycero-3-cytidine-5'-diphosphate + diphosphate. It catalyses the reaction 1-octadecanoyl-2-(9Z,12Z-octadecadienoyl)-sn-glycero-3-phosphate + CTP + H(+) = 1-octadecanoyl-2-(9Z,12Z-octadecadienoyl)-sn-glycero-3-cytidine-5'-diphosphate + diphosphate. It carries out the reaction 1-hexadecanoyl-2-(5Z,8Z,11Z,14Z-eicosatetraenoyl)-sn-glycero-3-phosphate + CTP + H(+) = 1-hexadecanoyl-2-(5Z,8Z,11Z,14Z-eicosatetraenoyl)-sn-glycero-3-cytidine-5'-diphosphate + diphosphate. The enzyme catalyses 1,2-di-(5Z,8Z,11Z,14Z)-eicosatetraenoyl-sn-glycero-3-phosphate + CTP + H(+) = 1,2-di-(5Z,8Z,11Z,14Z-eicosatetraenoyl)-sn-glycero-3-cytidine-5'-diphosphate + diphosphate. The catalysed reaction is 1-octadecanoyl-2-(9Z-octadecenoyl)-sn-glycero-3-phosphate + CTP + H(+) = 1-octadecanoyl-2-(9Z-octadecenoyl)-sn-glycero-3-cytidine-5'-diphosphate + diphosphate. It catalyses the reaction 1-octadecanoyl-2-(4Z,7Z,10Z,13Z,16Z,19Z-docosahexaenoyl)-sn-glycero-3-phosphate + CTP + H(+) = 1-octadecanoyl-2-(4Z,7Z,10Z,13Z,16Z,19Z-docosahexaenoyl)-sn-glycero-3-cytidine-5'-diphosphate + diphosphate. It carries out the reaction 1,2-di-(9Z,12Z-octadecadienoyl)-sn-glycero-3-phosphate + CTP + H(+) = 1,2-di-(9Z,12Z-octadecadienoyl)-sn-glycero-3-cytidine-5'-diphosphate + diphosphate. The enzyme catalyses 1,2-di-(9Z-octadecenoyl)-sn-glycero-3-phosphate + CTP + H(+) = 1,2-di-(9Z-octadecenoyl)-sn-glycero-3-cytidine-5'-diphosphate + diphosphate. The protein operates within phospholipid metabolism; CDP-diacylglycerol biosynthesis; CDP-diacylglycerol from sn-glycerol 3-phosphate: step 3/3. Its activity is regulated as follows. Activated by GTP. Inhibited by CDP-diacylglycerol and by phosphatidylglycerol 4,5-bisphosphate (PPI2). Functionally, catalyzes the conversion of phosphatidic acid (PA) to CDP-diacylglycerol (CDP-DAG), an essential intermediate in the synthesis of phosphatidylglycerol, cardiolipin and phosphatidylinositol. Exhibits almost no acyl chain preference for PA, showing no discrimination for the sn-1/sn-2 acyl chain composition of PAs. Plays an important role in regulatinng the growth of lipid droplets which are storage organelles at the center of lipid and energy homeostasis. Positively regulates the differentiation and development of adipocytes. The sequence is that of Phosphatidate cytidylyltransferase 1 from Rattus norvegicus (Rat).